The chain runs to 226 residues: UPF0758 protein SPD_0975 (226 aa).

The MPN domain occupies 103 to 225 (SILSSQKLAK…YFSYREKTDL (123 aa)). The Zn(2+) site is built by histidine 174, histidine 176, and aspartate 187. A JAMM motif motif is present at residues 174 to 187 (HNHPSGAVAPSQND).

The protein belongs to the UPF0758 family.

The polypeptide is UPF0758 protein SPD_0975 (Streptococcus pneumoniae serotype 2 (strain D39 / NCTC 7466)).